Consider the following 559-residue polypeptide: NAD-dependent malic enzyme 2 (559 aa).

Tyr98 acts as the Proton donor in catalysis. An NAD(+)-binding site is contributed by Arg151. Catalysis depends on Lys169, which acts as the Proton acceptor. 3 residues coordinate a divalent metal cation: Glu240, Asp241, and Asp264. Residues Asp264 and Asn413 each contribute to the NAD(+) site.

Belongs to the malic enzymes family. Homotetramer. It depends on Mg(2+) as a cofactor. Requires Mn(2+) as cofactor.

It catalyses the reaction (S)-malate + NAD(+) = pyruvate + CO2 + NADH. The enzyme catalyses oxaloacetate + H(+) = pyruvate + CO2. The sequence is that of NAD-dependent malic enzyme 2 from Vibrio vulnificus (strain YJ016).